The following is a 156-amino-acid chain: Small ribosomal subunit protein uS7 (156 aa).

Belongs to the universal ribosomal protein uS7 family. As to quaternary structure, part of the 30S ribosomal subunit. Contacts proteins S9 and S11.

In terms of biological role, one of the primary rRNA binding proteins, it binds directly to 16S rRNA where it nucleates assembly of the head domain of the 30S subunit. Is located at the subunit interface close to the decoding center, probably blocks exit of the E-site tRNA. The sequence is that of Small ribosomal subunit protein uS7 from Blochmanniella pennsylvanica (strain BPEN).